The primary structure comprises 332 residues: mRNA-decapping enzyme 1 (332 aa).

Positions 141 to 173 (ARAAKAASEAPQASVPAPTQAPAAPAQAPQMAP) are enriched in low complexity. The interval 141–175 (ARAAKAASEAPQASVPAPTQAPAAPAQAPQMAPQA) is disordered.

The protein belongs to the DCP1 family. In terms of assembly, may be a component of the decapping complex composed of dcap-1 and dcap-2. In terms of tissue distribution, expressed in neurons including touch receptor neurons and motor neurons.

It is found in the cytoplasm. The protein localises to the cytoplasmic granule. In terms of biological role, component of the decapping complex necessary for the degradation of mRNAs, both in normal mRNA turnover and in nonsense-mediated mRNA decay. In contrast to orthologs, does not possess decapping activity and does not remove the 7-methyl guanine cap structure from mRNA molecules. In the nervous system, negatively regulates the expression of insulin-like peptide ins-7, which in turn promotes longevity. This may in part be through promoting the activity of daf-16 in distal tissues. Required for the developmental axon guidance and regrowth of PLM touch receptor neurons. In ADL sensory neurons, plays a role in ciliary shape formation. Acts in neurons to promote larval survival at high temperatures by negatively regulating lin-14 expression. This Caenorhabditis elegans protein is mRNA-decapping enzyme 1.